The primary structure comprises 499 residues: Protein NODULATION SIGNALING PATHWAY 2 (499 aa).

The tract at residues 64–106 (NNTGPAFSDHTASTTSEEEEEEEATTTTMTTTTTTTTTTPEAA) is disordered. Positions 88–104 (TTTTMTTTTTTTTTTPE) are enriched in low complexity. One can recognise a GRAS domain in the interval 106 to 491 (ADDDFKGLRL…RRLLSASLWT (386 aa)). Residues 113–182 (LRLVHLLMAG…AGGAYNSSSK (70 aa)) form a leucine repeat I (LRI) region. The VHIID stretch occupies residues 201–265 (FQLLQDMSPY…PNGPHLRITA (65 aa)). The VHIID signature appears at 232–236 (VHIVD). Residues 281 to 313 (ETGRRLTAFATSLGQPFSFHHSRLESDETFRPA) are leucine repeat II (LRII). Positions 323–414 (LVFNCMLNLP…RVFLGPRIVG (92 aa)) are PFYRE. Residues 417–491 (ARIYRTGGGG…RRLLSASLWT (75 aa)) form an SAW region.

The protein belongs to the GRAS family. In terms of assembly, interacts with IPN2. Binds to RAD1. Interacts with RAM1. Highly expressed in roots.

It localises to the nucleus membrane. The protein resides in the endoplasmic reticulum. Functionally, transcriptional regulator essential for Nod-factor-induced gene expression. Acts downstream of calcium spiking and a calcium/calmodulin-dependent protein kinase required for activation of early nodulation gene expression. Transcription factor involved in the induction of NIN and ENOD40 genes, which are required for rhizobial infection and early nodule development. Does not seem to contribute to the early steps of the arbuscular mycorrhizal fungus infection and colonization processes in roots. Transcription factor involved in the positive regulation of the beta-carotene isomerase D27, which participates in a pathway leading to biosynthesis of strigolactones in roots. This is Protein NODULATION SIGNALING PATHWAY 2 from Lotus japonicus (Lotus corniculatus var. japonicus).